We begin with the raw amino-acid sequence, 719 residues long: Endonuclease MutS2 (719 aa).

ATP is bound at residue 273–280 (GPNTGGKT). The region spanning 644–719 (LDLRGYRYED…GFGVTVATLK (76 aa)) is the Smr domain.

Belongs to the DNA mismatch repair MutS family. MutS2 subfamily. As to quaternary structure, homodimer. Binds to stalled ribosomes, contacting rRNA.

Functionally, endonuclease that is involved in the suppression of homologous recombination and thus may have a key role in the control of bacterial genetic diversity. In terms of biological role, acts as a ribosome collision sensor, splitting the ribosome into its 2 subunits. Detects stalled/collided 70S ribosomes which it binds and splits by an ATP-hydrolysis driven conformational change. Acts upstream of the ribosome quality control system (RQC), a ribosome-associated complex that mediates the extraction of incompletely synthesized nascent chains from stalled ribosomes and their subsequent degradation. Probably generates substrates for RQC. The polypeptide is Endonuclease MutS2 (Staphylococcus aureus).